A 396-amino-acid polypeptide reads, in one-letter code: Adenosine deaminase 1 (396 aa).

Residues 1–26 are disordered; that stretch reads MTSRSTEKSAAANPAAVSKTPSPDRI. Residues His35 and His37 each coordinate Zn(2+). Substrate is bound by residues His37, Asp39, and Gly197. His224 provides a ligand contact to Zn(2+). Catalysis depends on Glu227, which acts as the Proton donor. Asp316 serves as a coordination point for Zn(2+).

The protein belongs to the metallo-dependent hydrolases superfamily. Adenosine and AMP deaminases family. Adenosine deaminase subfamily. In terms of assembly, homotetramer. Zn(2+) serves as cofactor.

It carries out the reaction adenosine + H2O + H(+) = inosine + NH4(+). The catalysed reaction is 2'-deoxyadenosine + H2O + H(+) = 2'-deoxyinosine + NH4(+). Coformycin and 2'-deoxycoformycin, whose structures mimic the transition state of the deamination reaction, are potent competitive inhibitors. Functionally, catalyzes the hydrolytic deamination of adenosine and 2-deoxyadenosine. The sequence is that of Adenosine deaminase 1 from Streptomyces coelicolor (strain ATCC BAA-471 / A3(2) / M145).